A 556-amino-acid chain; its full sequence is Oxygen-dependent choline dehydrogenase (556 aa).

4-33 (DYIIIGAGSAGNVLATRLTEDPNTTVLLLE) contacts FAD. The active-site Proton acceptor is the H473.

Belongs to the GMC oxidoreductase family. It depends on FAD as a cofactor.

It carries out the reaction choline + A = betaine aldehyde + AH2. The enzyme catalyses betaine aldehyde + NAD(+) + H2O = glycine betaine + NADH + 2 H(+). It participates in amine and polyamine biosynthesis; betaine biosynthesis via choline pathway; betaine aldehyde from choline (cytochrome c reductase route): step 1/1. In terms of biological role, involved in the biosynthesis of the osmoprotectant glycine betaine. Catalyzes the oxidation of choline to betaine aldehyde and betaine aldehyde to glycine betaine at the same rate. In Escherichia coli O17:K52:H18 (strain UMN026 / ExPEC), this protein is Oxygen-dependent choline dehydrogenase.